Here is a 538-residue protein sequence, read N- to C-terminus: MATSRDFGREPPRQQQDSDEAGHTLHDGCQHVSEHPQIDVTAHDSSASALPGDETTVGAATAALDPKEEERDPNIVDWDGPDDPANPQNWPPLKKWGNVAVLSIITFMVPLASSMFAPGIPQVLSDFDTNNPSLATFVVSVYILGLAAGPLVLAPMSELYGRVVIYHVGNVLFIIFTVACALSTNMNMLIAFRFLCGLVGAGPIAIGGGTIADLTTLQQRGTAMSVWSLGPLLGPSVGPVAGGFLSQAEGWRWIFWVLAITAGVITIAGLLVLRETHPGTLLERKTRRLRKETGNMNLRSKLDLQVAPRTLFLRSIVRPSKLLVLSPICLVLSVYSAFVYAMIYFMISTFTFVFQDNYGFSEGIVGLVYIALGLGMLFGVVVQQAIGNRIMKRLADKLNKGKPKPEYRIPPTLLAGFLIPTGLFIYGWTVQYHIQWAVPLLGALLAGMGICIINISTNLYLVDAFTLYAASALAASTVLRSIFGATFPLFALQMYETLGLGWGNSLLAFIAVAMFAIPPLLFYYGERLRSHPRFQVKL.

Composition is skewed to basic and acidic residues over residues 1–12, 20–35, and 65–74; these read MATSRDFGREPP, EAGH…VSEH, and DPKEEERDPN. 2 disordered regions span residues 1–35 and 65–90; these read MATS…VSEH and DPKE…PQNW. The next 12 helical transmembrane spans lie at 100-120, 134-154, 163-183, 194-214, 225-245, 253-273, 327-347, 362-382, 409-429, 436-456, 482-502, and 505-525; these read AVLS…APGI, LATF…LVLA, VVIY…CALS, FLCG…IADL, SVWS…GGFL, WIFW…LLVL, PICL…YFMI, EGIV…GVVV, IPPT…YGWT, WAVP…INIS, IFGA…GLGW, and SLLA…FYYG.

The protein belongs to the major facilitator superfamily.

It is found in the cell membrane. Functionally, efflux pump that might be required for efficient secretion of radicicol or other secondary metabolies produced by the radicicol gene cluster. The polypeptide is Efflux pump radE (Floropilus chiversii (Chaetomium chiversii)).